A 240-amino-acid polypeptide reads, in one-letter code: Spore coat polysaccharide biosynthesis protein SpsF (240 aa).

Belongs to the CMP-NeuNAc synthase family.

Its pathway is spore coat biogenesis; spore coat polysaccharide biosynthesis. This Bacillus subtilis (strain 168) protein is Spore coat polysaccharide biosynthesis protein SpsF (spsF).